We begin with the raw amino-acid sequence, 89 residues long: MSITAERKAALITEYATKAGDTGSPEVQVAILTERINNLTGHFKDHKKDNHSRRGLLTLVSSRRSLLDYLKKKDEARYTKLIGALGIRR.

It belongs to the universal ribosomal protein uS15 family. As to quaternary structure, part of the 30S ribosomal subunit. Forms a bridge to the 50S subunit in the 70S ribosome, contacting the 23S rRNA.

Functionally, one of the primary rRNA binding proteins, it binds directly to 16S rRNA where it helps nucleate assembly of the platform of the 30S subunit by binding and bridging several RNA helices of the 16S rRNA. Forms an intersubunit bridge (bridge B4) with the 23S rRNA of the 50S subunit in the ribosome. The sequence is that of Small ribosomal subunit protein uS15 from Agrobacterium fabrum (strain C58 / ATCC 33970) (Agrobacterium tumefaciens (strain C58)).